The chain runs to 110 residues: Large ribosomal subunit protein eL34 (110 aa).

The segment at 1 to 41 (MKNVLIHKGATYKTRSNRRRKVRTPSGKLVNRRVKKHSKKH) is disordered. Basic residues predominate over residues 30–41 (VNRRVKKHSKKH).

The protein belongs to the eukaryotic ribosomal protein eL34 family.

This chain is Large ribosomal subunit protein eL34 (RPL34), found in Encephalitozoon cuniculi (strain GB-M1) (Microsporidian parasite).